Reading from the N-terminus, the 293-residue chain is Urease accessory protein UreD (293 aa).

The interval 1-22 (MAVAQQAWSPGADPAPSAAPVS) is disordered. The segment covering 7–22 (AWSPGADPAPSAAPVS) has biased composition (low complexity).

Belongs to the UreD family. In terms of assembly, ureD, UreF and UreG form a complex that acts as a GTP-hydrolysis-dependent molecular chaperone, activating the urease apoprotein by helping to assemble the nickel containing metallocenter of UreC. The UreE protein probably delivers the nickel.

The protein localises to the cytoplasm. Its function is as follows. Required for maturation of urease via the functional incorporation of the urease nickel metallocenter. This chain is Urease accessory protein UreD, found in Alkalilimnicola ehrlichii (strain ATCC BAA-1101 / DSM 17681 / MLHE-1).